The primary structure comprises 153 residues: Putative nuclear shuttle protein (153 aa).

The protein belongs to the nanoviridae nuclear shuttle protein family.

It localises to the host nucleus. It is found in the host cytoplasm. Functionally, putative nuclear shuttle protein. The sequence is that of Putative nuclear shuttle protein (DNA-N) from Trifolium subterraneum (Subterranean clover).